A 1041-amino-acid chain; its full sequence is Probable rhamnogalacturonate lyase C (1041 aa).

Residues 1–21 form the signal peptide; that stretch reads MFASTLRKTFVFLGLATYSAA. N-linked (GlcNAc...) asparagine glycosylation is found at Asn-28, Asn-94, Asn-116, Asn-142, Asn-231, Asn-283, Asn-528, and Asn-634. Residues 703 to 728 are disordered; it reads ISRPCPRKGGTRRRKKERKKEGKKQG. Positions 707–720 are enriched in basic residues; sequence CPRKGGTRRRKKER. An N-linked (GlcNAc...) asparagine glycan is attached at Asn-864.

Belongs to the polysaccharide lyase 4 family.

Its subcellular location is the secreted. It carries out the reaction Endotype eliminative cleavage of L-alpha-rhamnopyranosyl-(1-&gt;4)-alpha-D-galactopyranosyluronic acid bonds of rhamnogalacturonan I domains in ramified hairy regions of pectin leaving L-rhamnopyranose at the reducing end and 4-deoxy-4,5-unsaturated D-galactopyranosyluronic acid at the non-reducing end.. In terms of biological role, pectinolytic enzymes consist of four classes of enzymes: pectin lyase, polygalacturonase, pectin methylesterase and rhamnogalacturonase. Degrades the rhamnogalacturonan I (RG-I) backbone of pectin. The polypeptide is Probable rhamnogalacturonate lyase C (rglC) (Emericella nidulans (strain FGSC A4 / ATCC 38163 / CBS 112.46 / NRRL 194 / M139) (Aspergillus nidulans)).